The chain runs to 311 residues: Salutaridine reductase (311 aa).

17–40 (VTGGNKGIGFEICKQLSSSGIMVV) is a binding site for NADP(+). Ser180 serves as a coordination point for substrate. The Proton acceptor role is filled by Tyr236.

The protein belongs to the short-chain dehydrogenases/reductases (SDR) family.

It catalyses the reaction (7S)-salutaridinol + NADP(+) = salutaridine + NADPH + H(+). Its activity is regulated as follows. Subject to substrate inhibition at salutaridine concentrations higher than 20 to 30 uM. Functionally, involved in biosynthesis of morphinan-type benzylisoquinoline alkaloids. Catalyzes the stereospecific conversion of salutaridine to salutaridinol. This chain is Salutaridine reductase, found in Papaver bracteatum (Great scarlet poppy).